The sequence spans 303 residues: Pycsar effector protein BcPycTIR (303 aa).

K22 to R138 contacts a nucleoside 3',5'-cyclic phosphate. Positions R154 to Y273 are TIR-like.

Purified protein forms large 2-dimensional sheets when incubated with cUMP and shorter filaments in the presence of cCMP.

The protein localises to the cytoplasm. The enzyme catalyses NAD(+) + H2O = ADP-D-ribose + nicotinamide + H(+). With respect to regulation, activated by cyclic UMP (cUMP) and to a lesser extent by cCMP. Pycsar (pyrimidine cyclase system for antiphage resistance) provides immunity against bacteriophage. The pyrimidine cyclase (PycC) synthesizes cyclic nucleotides in response to infection; these serve as specific second messenger signals. The signals activate the adjacent effector, leading to bacterial cell death and abortive phage infection. A clade B Pycsar system. In terms of biological role, the effector protein of a two-gene Pycsar system. Upon activation by cyclic UMP (cUMP) degrades cellular NAD(+). Expression of this and adjacent uridylate cyclase BcPycC (AC A0A0J5ZXG5) probably confers resistance to bacteriophage. The genes are probably only expressed in response to bacteriophage infection. This protein probably only responds to cUMP (produced by its cognate NTP cyclase). This is Pycsar effector protein BcPycTIR from Burkholderia cepacia (Pseudomonas cepacia).